A 456-amino-acid chain; its full sequence is Adenylosuccinate lyase (456 aa).

N(6)-(1,2-dicarboxyethyl)-AMP is bound by residues 15–16 (RY), 90–92 (NHD), and 122–123 (TS). His-171 serves as the catalytic Proton donor/acceptor. Position 247 (Gln-247) interacts with N(6)-(1,2-dicarboxyethyl)-AMP. Ser-295 (proton donor/acceptor) is an active-site residue. Residues Ser-296, 301 to 303 (KVN), Asn-309, Arg-335, and 340 to 344 (STVLR) each bind N(6)-(1,2-dicarboxyethyl)-AMP.

The protein belongs to the lyase 1 family. Adenylosuccinate lyase subfamily. Homotetramer. Residues from neighboring subunits contribute catalytic and substrate-binding residues to each active site.

The enzyme catalyses N(6)-(1,2-dicarboxyethyl)-AMP = fumarate + AMP. It carries out the reaction (2S)-2-[5-amino-1-(5-phospho-beta-D-ribosyl)imidazole-4-carboxamido]succinate = 5-amino-1-(5-phospho-beta-D-ribosyl)imidazole-4-carboxamide + fumarate. The protein operates within purine metabolism; AMP biosynthesis via de novo pathway; AMP from IMP: step 2/2. It participates in purine metabolism; IMP biosynthesis via de novo pathway; 5-amino-1-(5-phospho-D-ribosyl)imidazole-4-carboxamide from 5-amino-1-(5-phospho-D-ribosyl)imidazole-4-carboxylate: step 2/2. Catalyzes two reactions in de novo purine nucleotide biosynthesis. Catalyzes the breakdown of 5-aminoimidazole- (N-succinylocarboxamide) ribotide (SAICAR or 2-[5-amino-1-(5-phospho-beta-D-ribosyl)imidazole-4-carboxamido]succinate) to 5-aminoimidazole-4-carboxamide ribotide (AICAR or 5-amino-1-(5-phospho-beta-D-ribosyl)imidazole-4-carboxamide) and fumarate, and of adenylosuccinate (ADS or N(6)-(1,2-dicarboxyethyl)-AMP) to adenosine monophosphate (AMP) and fumarate. This Legionella pneumophila (strain Corby) protein is Adenylosuccinate lyase (purB).